A 255-amino-acid chain; its full sequence is Menaquinone reductase, iron-sulfur cluster-binding subunit (255 aa).

4Fe-4S ferredoxin-type domains lie at 11 to 41, 66 to 97, and 99 to 128; these read WGMVIDLDKCTGCGACMVACQAENNIAPQPD, HDVAYLPRPCMQCGKPSCVSVCPVVATDKNEE, and GIVSQVYPRCIGCRYCMASCPYHARYFNWF. Positions 20, 23, 26, 30, 75, 78, 83, 87, 108, 111, 114, and 118 each coordinate [4Fe-4S] cluster. C155, C158, C188, and C192 together coordinate [3Fe-4S] cluster.

As to quaternary structure, the Qrc complex is composed of four subunits: QrcA, QrcB, QrcC and QrcD. Can form a supercomplex with the [NiFe] hydrogenase HynA1 and the tetraheme Type I cytochrome c3 TpIc(3), its physiological electron donors. It depends on [4Fe-4S] cluster as a cofactor. [3Fe-4S] cluster serves as cofactor.

The protein localises to the periplasm. Component of the respiratory Qrc complex, that catalyzes the reduction of the menaquinone pool using electrons transferred from the reduced periplasmic cytochrome c3, and which is probably involved in sulfate respiration. Is likely essential for growth on H(2) or formate since the periplasmic hydrogenases and/or formate dehydrogenases act as primary electron donors for the Qrc complex. QrcC is an electron-transferring subunit; its cubane iron sulfur clusters form a pathway for electron transfer between the hemes of QrcA and the membrane quinone pool. The protein is Menaquinone reductase, iron-sulfur cluster-binding subunit of Nitratidesulfovibrio vulgaris (strain ATCC 29579 / DSM 644 / CCUG 34227 / NCIMB 8303 / VKM B-1760 / Hildenborough) (Desulfovibrio vulgaris).